Consider the following 177-residue polypeptide: Calcineurin subunit B (177 aa).

4 EF-hand domains span residues 25 to 60 (KEIK…AVNP), 62 to 92 (VKRV…FNAQ), 94 to 129 (DKQR…MVGN), and 135 to 170 (QLQQ…QDLE). 20 residues coordinate Ca(2+): aspartate 38, aspartate 40, asparagine 42, threonine 44, glutamate 49, aspartate 70, asparagine 72, aspartate 74, serine 76, glutamate 81, aspartate 107, aspartate 109, aspartate 111, tyrosine 113, glutamate 118, aspartate 148, aspartate 150, aspartate 152, lysine 154, and glutamate 159.

This sequence belongs to the calcineurin regulatory subunit family. In terms of assembly, composed of a catalytic subunit (A) and a regulatory subunit (B).

In terms of biological role, regulatory subunit of calcineurin, a calcium-dependent, calmodulin stimulated protein phosphatase. Confers calcium sensitivity. The protein is Calcineurin subunit B (CNB1) of Naegleria gruberi (Amoeba).